A 303-amino-acid polypeptide reads, in one-letter code: Protein SULFUR DEFICIENCY-INDUCED 2 (303 aa).

Positions 62-89 (RVDSALKDMALLMKQQNRAEEAIDAIQS) form a coiled coil. TPR repeat units lie at residues 64-97 (DSAL…CSRQ), 100-133 (ESLD…IYQG), 160-193 (SRIL…EPDA), and 195-226 (KACN…ENKE). Residues 232-253 (RLMARVQELLSELKPQEEEAAA) are a coiled coil.

This sequence belongs to the MS5 protein family.

It localises to the nucleus. In terms of biological role, involved in the utilization of stored sulfate under sulfur-deficient conditions. This Arabidopsis thaliana (Mouse-ear cress) protein is Protein SULFUR DEFICIENCY-INDUCED 2.